A 121-amino-acid chain; its full sequence is Large ribosomal subunit protein bL12 (121 aa).

This sequence belongs to the bacterial ribosomal protein bL12 family. Homodimer. Part of the ribosomal stalk of the 50S ribosomal subunit. Forms a multimeric L10(L12)X complex, where L10 forms an elongated spine to which 2 to 4 L12 dimers bind in a sequential fashion. Binds GTP-bound translation factors.

In terms of biological role, forms part of the ribosomal stalk which helps the ribosome interact with GTP-bound translation factors. Is thus essential for accurate translation. The sequence is that of Large ribosomal subunit protein bL12 from Pseudomonas syringae pv. tomato (strain ATCC BAA-871 / DC3000).